The sequence spans 77 residues: Acyl carrier protein (77 aa).

One can recognise a Carrier domain in the interval 1–76 (MSIEERVKKI…SAIDYVAKAN (76 aa)). S36 bears the O-(pantetheine 4'-phosphoryl)serine mark.

This sequence belongs to the acyl carrier protein (ACP) family. Post-translationally, 4'-phosphopantetheine is transferred from CoA to a specific serine of apo-ACP by AcpS. This modification is essential for activity because fatty acids are bound in thioester linkage to the sulfhydryl of the prosthetic group.

The protein localises to the cytoplasm. Its pathway is lipid metabolism; fatty acid biosynthesis. Functionally, carrier of the growing fatty acid chain in fatty acid biosynthesis. The polypeptide is Acyl carrier protein (Haemophilus ducreyi (strain 35000HP / ATCC 700724)).